The following is a 229-amino-acid chain: Ribonuclease 3 (229 aa).

An RNase III domain is found at 8-130; sequence LTELEKIVGY…IIGAIYLDSD (123 aa). Mg(2+) is bound at residue E43. Residue D47 is part of the active site. The Mg(2+) site is built by D116 and E119. E119 is an active-site residue. In terms of domain architecture, DRBM spans 157–227; that stretch reads DPKTRLQELL…ATAALEHLQE (71 aa). Positions 201–229 are disordered; that stretch reads SPFKGTGTSRRKAEQAAATAALEHLQESA.

This sequence belongs to the ribonuclease III family. As to quaternary structure, homodimer. It depends on Mg(2+) as a cofactor.

Its subcellular location is the cytoplasm. The enzyme catalyses Endonucleolytic cleavage to 5'-phosphomonoester.. Its function is as follows. Digests double-stranded RNA. Involved in the processing of primary rRNA transcript to yield the immediate precursors to the large and small rRNAs (23S and 16S). Processes some mRNAs, and tRNAs when they are encoded in the rRNA operon. Processes pre-crRNA and tracrRNA of type II CRISPR loci if present in the organism. The polypeptide is Ribonuclease 3 (Idiomarina loihiensis (strain ATCC BAA-735 / DSM 15497 / L2-TR)).